The primary structure comprises 219 residues: C-type lectin domain family 4 member E (219 aa).

The Cytoplasmic portion of the chain corresponds to 1-19 (MNSSKSSETQCTERGCFSS). The chain crosses the membrane as a helical; Signal-anchor for type II membrane protein span at residues 20–40 (QMFLWTVAGIPILFLSACFIT). Residues 41 to 219 (RCVVTFRIFQ…INPLNKGKSL (179 aa)) lie on the Extracellular side of the membrane. Asparagine 62 carries N-linked (GlcNAc...) asparagine glycosylation. A disulfide bridge connects residues cysteine 80 and cysteine 91. The 120-residue stretch at 87-206 (FQSSCYFFST…CFLNYFRICE (120 aa)) folds into the C-type lectin domain. N-linked (GlcNAc...) asparagine glycosylation is present at asparagine 107. 2 disulfide bridges follow: cysteine 108–cysteine 205 and cysteine 179–cysteine 197. The Ca(2+) site is built by valine 117, asparagine 119, glutamate 123, glutamate 169, asparagine 171, asparagine 193, aspartate 194, and glutamate 206. Residues 169 to 171 (EPN) carry the Confers specificity for glucose/mannose-type carbohydrates motif.

Monomer and homodimer. Interacts with signaling adapter Fc receptor gamma chain/FCER1G to form a functional complex; the interaction is direct. Alternatively, acts as a bridge for interaction between CLEC4D and FCER1G. A heterodimer of CLEC4E and CLEC4D associates with FCER1G to form a functional complex. Interacts with SAP130 nuclear protein that is released from necrotic cells; the interaction is direct. Expressed in monocytes and macrophages.

The protein localises to the cell membrane. The protein resides in the cell projection. It localises to the phagocytic cup. Functionally, calcium-dependent lectin that acts as a pattern recognition receptor (PRR) of the innate immune system: recognizes damage-associated molecular patterns (DAMPs) of abnormal self and pathogen-associated molecular patterns (PAMPs) of bacteria and fungi. The PAMPs notably include mycobacterial trehalose 6,6'-dimycolate (TDM), a cell wall glycolipid with potent adjuvant immunomodulatory functions. Interacts with signaling adapter Fc receptor gamma chain/FCER1G to form a functional complex in myeloid cells. Binding of mycobacterial trehalose 6,6'-dimycolate (TDM) to this receptor complex leads to phosphorylation of the immunoreceptor tyrosine-based activation motif (ITAM) of FCER1G, triggering activation of SYK, CARD9 and NF-kappa-B, consequently driving maturation of antigen-presenting cells and shaping antigen-specific priming of T-cells toward effector T-helper 1 and T-helper 17 cell subtypes. Also recognizes alpha-mannose residues on pathogenic fungi of the genus Malassezia and mediates macrophage activation. Through recognition of DAMPs released upon nonhomeostatic cell death, enables immune sensing of damaged self and promotes inflammatory cell infiltration into the damaged tissue. This chain is C-type lectin domain family 4 member E, found in Homo sapiens (Human).